Reading from the N-terminus, the 89-residue chain is uncharacterized protein (89 aa).

To Synechocystis PCC 6803 slr1025.

This is an uncharacterized protein from Ureaplasma parvum serovar 3 (strain ATCC 700970).